We begin with the raw amino-acid sequence, 635 residues long: Threonine--tRNA ligase (635 aa).

The region spanning 1–61 (MIKITLKDGS…KEDAALELLT (61 aa)) is the TGS domain. The interval 242–532 (DHRKLGQELD…LTEHFAGAFP (291 aa)) is catalytic. Residues C333, H384, and H509 each coordinate Zn(2+).

Belongs to the class-II aminoacyl-tRNA synthetase family. As to quaternary structure, homodimer. It depends on Zn(2+) as a cofactor.

The protein resides in the cytoplasm. The enzyme catalyses tRNA(Thr) + L-threonine + ATP = L-threonyl-tRNA(Thr) + AMP + diphosphate + H(+). Its function is as follows. Catalyzes the attachment of threonine to tRNA(Thr) in a two-step reaction: L-threonine is first activated by ATP to form Thr-AMP and then transferred to the acceptor end of tRNA(Thr). Also edits incorrectly charged L-seryl-tRNA(Thr). The sequence is that of Threonine--tRNA ligase from Desulforamulus reducens (strain ATCC BAA-1160 / DSM 100696 / MI-1) (Desulfotomaculum reducens).